Here is a 349-residue protein sequence, read N- to C-terminus: Phenylalanine--tRNA ligase alpha subunit (349 aa).

Position 259 (Glu259) interacts with Mg(2+).

Belongs to the class-II aminoacyl-tRNA synthetase family. Phe-tRNA synthetase alpha subunit type 1 subfamily. As to quaternary structure, tetramer of two alpha and two beta subunits. Mg(2+) is required as a cofactor.

It is found in the cytoplasm. The enzyme catalyses tRNA(Phe) + L-phenylalanine + ATP = L-phenylalanyl-tRNA(Phe) + AMP + diphosphate + H(+). The chain is Phenylalanine--tRNA ligase alpha subunit from Lactobacillus delbrueckii subsp. bulgaricus (strain ATCC 11842 / DSM 20081 / BCRC 10696 / JCM 1002 / NBRC 13953 / NCIMB 11778 / NCTC 12712 / WDCM 00102 / Lb 14).